The chain runs to 298 residues: MKIGIIGGGSVGLLCAYYLSLYHDVTVVTRRQEQAAAIQSEGIRLYKGGEEFRADCSADTSINSDFDLLVVTVKQHQLQSVFSSLERIGKTNILFLQNGMGHIHDLKDWHVGHSIYVGIVEHGAVRKSDTAVDHTGLGAIKWSAFDDAEPDRLNILFQHNHSDFPIYYETDWYRLLTGKLIVNACINPLTALLQVKNGELLTTPAYLAFMKLVFQEACRILKLENEEKAWERVQAVCGQTKENRSSMLVDVIGGRQTEADAIIGYLLKEASLQGLDAVHLEFLYGSIKALERNTNKVF.

NADP(+)-binding positions include 7–12 (GGGSVG), Asn-98, and Ala-124. Asn-98 provides a ligand contact to substrate. The active-site Proton donor is the Lys-179. Asn-183, Asn-187, Asn-197, and Ser-246 together coordinate substrate. Residue Glu-258 participates in NADP(+) binding.

Belongs to the ketopantoate reductase family.

It is found in the cytoplasm. It catalyses the reaction (R)-pantoate + NADP(+) = 2-dehydropantoate + NADPH + H(+). The protein operates within cofactor biosynthesis; (R)-pantothenate biosynthesis; (R)-pantoate from 3-methyl-2-oxobutanoate: step 2/2. Its function is as follows. Catalyzes the NADPH-dependent reduction of ketopantoate into pantoic acid. This chain is 2-dehydropantoate 2-reductase (panE), found in Bacillus subtilis (strain 168).